Consider the following 294-residue polypeptide: 33 kDa chaperonin (294 aa).

Intrachain disulfides connect C238–C240 and C271–C274.

The protein belongs to the HSP33 family. Under oxidizing conditions two disulfide bonds are formed involving the reactive cysteines. Under reducing conditions zinc is bound to the reactive cysteines and the protein is inactive.

Its subcellular location is the cytoplasm. Redox regulated molecular chaperone. Protects both thermally unfolding and oxidatively damaged proteins from irreversible aggregation. Plays an important role in the bacterial defense system toward oxidative stress. This Clostridium novyi (strain NT) protein is 33 kDa chaperonin.